The following is a 211-amino-acid chain: Nucleoside triphosphate pyrophosphatase (211 aa).

Residue D75 is the Proton acceptor of the active site.

The protein belongs to the Maf family. A divalent metal cation serves as cofactor.

Its subcellular location is the cytoplasm. The catalysed reaction is a ribonucleoside 5'-triphosphate + H2O = a ribonucleoside 5'-phosphate + diphosphate + H(+). The enzyme catalyses a 2'-deoxyribonucleoside 5'-triphosphate + H2O = a 2'-deoxyribonucleoside 5'-phosphate + diphosphate + H(+). Functionally, nucleoside triphosphate pyrophosphatase. May have a dual role in cell division arrest and in preventing the incorporation of modified nucleotides into cellular nucleic acids. The polypeptide is Nucleoside triphosphate pyrophosphatase (Prochlorococcus marinus (strain NATL2A)).